Reading from the N-terminus, the 776-residue chain is Protein SEY1 (776 aa).

At 1–681 (MADRSAIQLI…KRSIITTRTH (681 aa)) the chain is on the cytoplasmic side. Residues 34–263 (GLDYHVISVF…TENYYFKPQY (230 aa)) enclose the GB1/RHD3-type G domain. Residue 44 to 51 (GSQSSGKS) coordinates GTP. A helical membrane pass occupies residues 682–702 (IPPWIYVLLAVLGWNEFVAVI). At 703–705 (RNP) the chain is on the lumenal side. A helical transmembrane segment spans residues 706 to 726 (LFVTLTLILGATFFVIHKFGL). Residues 727–776 (WGPVVNVVQSAVGETRTAIKDKLRQFVVEDHEVKESFEMKDFSKNEQKEK) are Cytoplasmic-facing.

The protein belongs to the TRAFAC class dynamin-like GTPase superfamily. GB1/RHD3 GTPase family. RHD3 subfamily. As to quaternary structure, interacts with RTN1 and YOP1; GTP binding is not required for these interactions.

The protein localises to the endoplasmic reticulum membrane. Its function is as follows. Cooperates with the reticulon proteins RTN1 and RTN2 and the tubule-shaping DP1 family protein YOP1 to generate and maintain the structure of the tubular endoplasmic reticulum network. Has GTPase activity, which is required for its function in ER organization. In Saccharomyces cerevisiae (strain AWRI1631) (Baker's yeast), this protein is Protein SEY1.